Here is a 151-residue protein sequence, read N- to C-terminus: UPF0178 protein YaiI (151 aa).

This sequence belongs to the UPF0178 family.

This is UPF0178 protein YaiI from Salmonella paratyphi B (strain ATCC BAA-1250 / SPB7).